A 486-amino-acid chain; its full sequence is Aspartyl/glutamyl-tRNA(Asn/Gln) amidotransferase subunit B (486 aa).

This sequence belongs to the GatB/GatE family. GatB subfamily. As to quaternary structure, heterotrimer of A, B and C subunits.

It carries out the reaction L-glutamyl-tRNA(Gln) + L-glutamine + ATP + H2O = L-glutaminyl-tRNA(Gln) + L-glutamate + ADP + phosphate + H(+). The catalysed reaction is L-aspartyl-tRNA(Asn) + L-glutamine + ATP + H2O = L-asparaginyl-tRNA(Asn) + L-glutamate + ADP + phosphate + 2 H(+). Its function is as follows. Allows the formation of correctly charged Asn-tRNA(Asn) or Gln-tRNA(Gln) through the transamidation of misacylated Asp-tRNA(Asn) or Glu-tRNA(Gln) in organisms which lack either or both of asparaginyl-tRNA or glutaminyl-tRNA synthetases. The reaction takes place in the presence of glutamine and ATP through an activated phospho-Asp-tRNA(Asn) or phospho-Glu-tRNA(Gln). The protein is Aspartyl/glutamyl-tRNA(Asn/Gln) amidotransferase subunit B of Orientia tsutsugamushi (strain Boryong) (Rickettsia tsutsugamushi).